The following is a 202-amino-acid chain: Outer-membrane lipoprotein carrier protein (202 aa).

Positions 1–21 (MKRLLVACCFLSGLISASALA) are cleaved as a signal peptide.

The protein belongs to the LolA family. As to quaternary structure, monomer.

It localises to the periplasm. Its function is as follows. Participates in the translocation of lipoproteins from the inner membrane to the outer membrane. Only forms a complex with a lipoprotein if the residue after the N-terminal Cys is not an aspartate (The Asp acts as a targeting signal to indicate that the lipoprotein should stay in the inner membrane). In Yersinia pestis bv. Antiqua (strain Antiqua), this protein is Outer-membrane lipoprotein carrier protein.